The following is a 459-amino-acid chain: MSFATINRSATKTLSTSIPAIEDAFAAEPSLKKRVYDAIENTPQHVPLFEDIAKYTSSLLARHAIPPTQPVEADEAPAAKKRKLQNGNAAGDTQSPGNVEAEAPLQFSMQDVSFAIPQRKKLTLEVTAGRGSLRARNQTSKEVEFGVPMDRIRHVLCLPVPEKSQRQFNFCIIPQYSDGINPPPEGEQAFESMVWTVSDGPAKAAFSGNGQQVGAGDGETAEALVRRVLNENLSHTKVVRPDERQFVSAMPEAHRKSEKAYHVKAFRGSKEGYLFFLSTGIFFGFKKPLIFFAFENIESVSYTSVLQRTFNLNIAVRPHNGGENATQEVELSMIDQADYAGIDAYIKKNGLQDASLAEARRAKRYNINGAKAEENAAGTANDNAVEESELQKAQRELEDQEDEEEEDYNPGSDGESDGSGSSSEEGDDGNEEGDEDDEGQDLVAAELGSEAEDIAEDEL.

Disordered regions lie at residues 67-99 and 373-459; these read PTQP…PGNV and EENA…EDEL. A compositionally biased stretch (polar residues) spans 85–97; the sequence is QNGNAAGDTQSPG. Acidic residues-rich tracts occupy residues 398 to 408, 424 to 440, and 449 to 459; these read EDQEDEEEEDY, EEGD…DEGQ, and SEAEDIAEDEL.

The protein belongs to the RTT106 family. In terms of assembly, interacts with histones H3 and H4.

The protein localises to the nucleus. It is found in the chromosome. In terms of biological role, histones H3 and H4 chaperone involved in the nucleosome formation and heterochromatin silencing. Required for the deposition of H3K56ac-carrying H3-H4 complex onto newly-replicated DNA. Plays a role in the transcriptional regulation of the cell-cycle dependent histone genes by creating a repressive structure at the core histone gene promoter. The chain is Histone chaperone rtt106 (rtt106) from Aspergillus fumigatus (strain ATCC MYA-4609 / CBS 101355 / FGSC A1100 / Af293) (Neosartorya fumigata).